Consider the following 336-residue polypeptide: Inositol 2-dehydrogenase (336 aa).

Belongs to the Gfo/Idh/MocA family. In terms of assembly, homotetramer.

The catalysed reaction is myo-inositol + NAD(+) = scyllo-inosose + NADH + H(+). Its function is as follows. Involved in the oxidation of myo-inositol (MI) to 2-keto-myo-inositol (2KMI or 2-inosose). The protein is Inositol 2-dehydrogenase of Agrobacterium fabrum (strain C58 / ATCC 33970) (Agrobacterium tumefaciens (strain C58)).